The primary structure comprises 316 residues: Thymidylate synthase (316 aa).

DUMP contacts are provided by residues arginine 23 and 178–179 (RR). Cysteine 198 functions as the Nucleophile in the catalytic mechanism. DUMP is bound by residues 218-221 (RSGD), asparagine 229, and 259-261 (HIY). Aspartate 221 is a (6R)-5,10-methylene-5,6,7,8-tetrahydrofolate binding site. Residue alanine 315 coordinates (6R)-5,10-methylene-5,6,7,8-tetrahydrofolate.

The protein belongs to the thymidylate synthase family. Bacterial-type ThyA subfamily. In terms of assembly, homodimer.

The protein localises to the cytoplasm. It catalyses the reaction dUMP + (6R)-5,10-methylene-5,6,7,8-tetrahydrofolate = 7,8-dihydrofolate + dTMP. It functions in the pathway pyrimidine metabolism; dTTP biosynthesis. Its function is as follows. Catalyzes the reductive methylation of 2'-deoxyuridine-5'-monophosphate (dUMP) to 2'-deoxythymidine-5'-monophosphate (dTMP) while utilizing 5,10-methylenetetrahydrofolate (mTHF) as the methyl donor and reductant in the reaction, yielding dihydrofolate (DHF) as a by-product. This enzymatic reaction provides an intracellular de novo source of dTMP, an essential precursor for DNA biosynthesis. The polypeptide is Thymidylate synthase (Latilactobacillus sakei subsp. sakei (strain 23K) (Lactobacillus sakei subsp. sakei)).